Reading from the N-terminus, the 100-residue chain is Large ribosomal subunit protein uL23 (100 aa).

Belongs to the universal ribosomal protein uL23 family. As to quaternary structure, part of the 50S ribosomal subunit. Contacts protein L29, and trigger factor when it is bound to the ribosome.

Its function is as follows. One of the early assembly proteins it binds 23S rRNA. One of the proteins that surrounds the polypeptide exit tunnel on the outside of the ribosome. Forms the main docking site for trigger factor binding to the ribosome. This is Large ribosomal subunit protein uL23 from Mycolicibacterium smegmatis (strain ATCC 700084 / mc(2)155) (Mycobacterium smegmatis).